A 152-amino-acid polypeptide reads, in one-letter code: Spermine/spermidine N(1)-acetyltransferase (152 aa).

The N-acetyltransferase domain occupies 3 to 152; the sequence is INIKAVTDDN…NGEKVMVKEL (150 aa). Residues 82-84, 89-95, and 122-131 each bind acetyl-CoA; these read FFI, QGKGLGK, and NIHAIRLYQR. Residue Y129 is the Proton donor of the active site.

Belongs to the acetyltransferase family.

The catalysed reaction is an alkane-alpha,omega-diamine + acetyl-CoA = an N-acetylalkane-alpha,omega-diamine + CoA + H(+). The enzyme catalyses spermine + acetyl-CoA = N(1)-acetylspermine + CoA + H(+). It carries out the reaction spermidine + acetyl-CoA = N(1)-acetylspermidine + CoA + H(+). It participates in amine and polyamine degradation; spermine degradation. The protein operates within amine and polyamine degradation; spermidine degradation. Its activity is regulated as follows. Putrescine and N(8)-acetylspermidine are competitive inhibitors of spermidine acetylation. Functionally, acetylates both spermidine and spermine at primary propyl amine moieties, with spermine being the preferred substrate. The protein is Spermine/spermidine N(1)-acetyltransferase (bltD) of Bacillus subtilis (strain 168).